We begin with the raw amino-acid sequence, 284 residues long: Bifunctional protein FolD (284 aa).

NADP(+) contacts are provided by residues 166 to 168 (GAS), Ser191, and Ile232.

It belongs to the tetrahydrofolate dehydrogenase/cyclohydrolase family. As to quaternary structure, homodimer.

It catalyses the reaction (6R)-5,10-methylene-5,6,7,8-tetrahydrofolate + NADP(+) = (6R)-5,10-methenyltetrahydrofolate + NADPH. The enzyme catalyses (6R)-5,10-methenyltetrahydrofolate + H2O = (6R)-10-formyltetrahydrofolate + H(+). It participates in one-carbon metabolism; tetrahydrofolate interconversion. Functionally, catalyzes the oxidation of 5,10-methylenetetrahydrofolate to 5,10-methenyltetrahydrofolate and then the hydrolysis of 5,10-methenyltetrahydrofolate to 10-formyltetrahydrofolate. The sequence is that of Bifunctional protein FolD from Neisseria meningitidis serogroup A / serotype 4A (strain DSM 15465 / Z2491).